We begin with the raw amino-acid sequence, 70 residues long: Small ribosomal subunit protein bS21 (70 aa).

A disordered region spans residues 40–70 (KPTAERKRKHAAAVKRHYKRIRSQQLPPRLY). Residues 45–61 (RKRKHAAAVKRHYKRIR) are compositionally biased toward basic residues.

The protein belongs to the bacterial ribosomal protein bS21 family.

The protein is Small ribosomal subunit protein bS21 of Bordetella parapertussis (strain 12822 / ATCC BAA-587 / NCTC 13253).